A 508-amino-acid polypeptide reads, in one-letter code: Photosystem II CP47 reaction center protein (508 aa).

Transmembrane regions (helical) follow at residues 21–36, 101–115, 140–156, 203–218, 237–252, and 457–472; these read SVHIMHTALVAGWAGS, IVFSGLCFLAAIWHW, GIHLFLAGVACFGFGAF, IAAGTLGILAGLFHLS, VLSSSIAAVFFAAFVV, and SFALLFFFGHIWHGAR.

Belongs to the PsbB/PsbC family. PsbB subfamily. As to quaternary structure, PSII is composed of 1 copy each of membrane proteins PsbA, PsbB, PsbC, PsbD, PsbE, PsbF, PsbH, PsbI, PsbJ, PsbK, PsbL, PsbM, PsbT, PsbX, PsbY, PsbZ, Psb30/Ycf12, at least 3 peripheral proteins of the oxygen-evolving complex and a large number of cofactors. It forms dimeric complexes. Requires Binds multiple chlorophylls. PSII binds additional chlorophylls, carotenoids and specific lipids. as cofactor.

It localises to the plastid. The protein resides in the chloroplast thylakoid membrane. In terms of biological role, one of the components of the core complex of photosystem II (PSII). It binds chlorophyll and helps catalyze the primary light-induced photochemical processes of PSII. PSII is a light-driven water:plastoquinone oxidoreductase, using light energy to abstract electrons from H(2)O, generating O(2) and a proton gradient subsequently used for ATP formation. The chain is Photosystem II CP47 reaction center protein from Glycine max (Soybean).